The sequence spans 415 residues: MKLMVKIALLTCGAEWSGVYHEIEKAAQKVGGELIFPEVDLSYIDEVEDRLGFKVGSANLKLMFARAMSIIEGNTDAEAVFIATCFRCAEGALVRNEVRKLIQQNTNLPVVMYSFTERTKASELLTRMEALTTIVERKSLLARKKQEGISLGIDSGSTTTKAVVMIDDEVAGTGWIYTKDVIESAKEAVNNALKEAGISLDQVETIGTTGYGRYTVGEYFKADLIQEELTVNSKGAAYLADKQEGEATVIDIGGMDNKAISLYDAIPDGFTMGGICAGASGRFFEITARRLGVSLQELGELAAKGDWRKIKMNSYCIVFGIQDLVTALAEGAKAEDVAAAAAHSVAEQVFEQQLQEVDVRDPVILVGGSSLLKGLVIAMEEVLGRKIIVPRYSQLIGAVGAALLSSGYRYKKMKA.

The [4Fe-4S] cluster site is built by Cys276 and Cys316.

As to quaternary structure, homodimer. The cofactor is [4Fe-4S] cluster.

This is an uncharacterized protein from Methanocaldococcus jannaschii (strain ATCC 43067 / DSM 2661 / JAL-1 / JCM 10045 / NBRC 100440) (Methanococcus jannaschii).